The following is a 1020-amino-acid chain: Valine--tRNA ligase (1020 aa).

Positions 45–55 (PNVTGALHVGH) match the 'HIGH' region motif. The 'KMSKS' region motif lies at 661 to 665 (KMSKT). Lysine 664 is a binding site for ATP. Residues 955–1020 (AEKDRLEKAK…EALARLAELG (66 aa)) adopt a coiled-coil conformation.

Belongs to the class-I aminoacyl-tRNA synthetase family. ValS type 1 subfamily. In terms of assembly, monomer.

Its subcellular location is the cytoplasm. It carries out the reaction tRNA(Val) + L-valine + ATP = L-valyl-tRNA(Val) + AMP + diphosphate. Catalyzes the attachment of valine to tRNA(Val). As ValRS can inadvertently accommodate and process structurally similar amino acids such as threonine, to avoid such errors, it has a 'posttransfer' editing activity that hydrolyzes mischarged Thr-tRNA(Val) in a tRNA-dependent manner. This chain is Valine--tRNA ligase, found in Ruegeria pomeroyi (strain ATCC 700808 / DSM 15171 / DSS-3) (Silicibacter pomeroyi).